The chain runs to 116 residues: Probable early E4 11 kDa protein (116 aa).

This chain is Probable early E4 11 kDa protein, found in Human adenovirus A serotype 12 (HAdV-12).